The chain runs to 935 residues: C-1-tetrahydrofolate synthase, cytoplasmic (935 aa).

Position 1 is an N-acetylmethionine (Met1). A methylenetetrahydrofolate dehydrogenase and methenyltetrahydrofolate cyclohydrolase (D/C) domain region spans residues 2-291; it reads APAEILNGKE…MLMQSTVESA (290 aa). Substrate is bound by residues 52 to 56 and 99 to 101; these read YINVK and VQL. Residue Lys56 is part of the active site. Residues 172 to 174 and Ser197 each bind NADP(+); that span reads GRS. 272–276 is a binding site for substrate; that stretch reads PGGVG. A formyltetrahydrofolate synthetase domain region spans residues 310–935; sequence LNLKTPVPSD…PETEQVNGLF (626 aa). Ser318 carries the phosphoserine modification. Position 380-387 (380-387) interacts with ATP; sequence TPLGEGKS. Phosphoserine occurs at positions 413 and 490.

It in the N-terminal section; belongs to the tetrahydrofolate dehydrogenase/cyclohydrolase family. The protein in the C-terminal section; belongs to the formate--tetrahydrofolate ligase family. In terms of assembly, homodimer. In terms of tissue distribution, ubiquitous.

It localises to the cytoplasm. The enzyme catalyses (6R)-5,10-methylene-5,6,7,8-tetrahydrofolate + NADP(+) = (6R)-5,10-methenyltetrahydrofolate + NADPH. The catalysed reaction is (6R)-5,10-methenyltetrahydrofolate + H2O = (6R)-10-formyltetrahydrofolate + H(+). It carries out the reaction (6S)-5,6,7,8-tetrahydrofolate + formate + ATP = (6R)-10-formyltetrahydrofolate + ADP + phosphate. It participates in one-carbon metabolism; tetrahydrofolate interconversion. Its function is as follows. Trifunctional enzyme that catalyzes the interconversion of three forms of one-carbon-substituted tetrahydrofolate: (6R)-5,10-methylene-5,6,7,8-tetrahydrofolate, 5,10-methenyltetrahydrofolate and (6S)-10-formyltetrahydrofolate. These derivatives of tetrahydrofolate are differentially required in nucleotide and amino acid biosynthesis, (6S)-10-formyltetrahydrofolate being required for purine biosynthesis while (6R)-5,10-methylene-5,6,7,8-tetrahydrofolate is used for serine and methionine biosynthesis for instance. The chain is C-1-tetrahydrofolate synthase, cytoplasmic (MTHFD1) from Homo sapiens (Human).